Reading from the N-terminus, the 1418-residue chain is Ankyrin repeat and fibronectin type-III domain-containing protein 1 (1418 aa).

Positions 119–236 (RDSVCSLPPP…DRGETPSLSE (118 aa)) are disordered. The segment covering 144 to 154 (PENTSINLSQC) has biased composition (polar residues). Positions 171 to 186 (SASPTSSTPLRTTSTP) are enriched in low complexity. Residues 223-236 (LRDHDRGETPSLSE) are compositionally biased toward basic and acidic residues. 2 ANK repeats span residues 419–450 (QSSE…ELDL) and 456–485 (EGLT…KESP). In terms of domain architecture, Fibronectin type-III spans 556–652 (APLMVRLSVT…LSQPPSAVPS (97 aa)). Residues 893-900 (GLYLGYLK) are highly conserved peptide sequence. 3 disordered regions span residues 1134–1179 (VQKN…EVFL), 1321–1343 (LETP…YRQP), and 1361–1418 (KTSP…SSTL). The segment covering 1136-1146 (KNDSTSSNTDY) has biased composition (polar residues). Over residues 1407-1418 (NEQVSEILSSTL) the composition is skewed to polar residues.

Its function is as follows. Required for vestibular-related functions. The sequence is that of Ankyrin repeat and fibronectin type-III domain-containing protein 1 (ankfn1) from Danio rerio (Zebrafish).